The primary structure comprises 221 residues: Endonuclease V (221 aa).

2 residues coordinate Mg(2+): Asp-43 and Asp-111.

This sequence belongs to the endonuclease V family. Requires Mg(2+) as cofactor.

Its subcellular location is the cytoplasm. It catalyses the reaction Endonucleolytic cleavage at apurinic or apyrimidinic sites to products with a 5'-phosphate.. Functionally, DNA repair enzyme involved in the repair of deaminated bases. Selectively cleaves double-stranded DNA at the second phosphodiester bond 3' to a deoxyinosine leaving behind the intact lesion on the nicked DNA. In Azotobacter vinelandii (strain DJ / ATCC BAA-1303), this protein is Endonuclease V.